The chain runs to 53 residues: MIVLDTSIIIDYFRGVETTYNLIDEESEIAVTTINCSQIIRGDTFQLQAPLSC.

This is an uncharacterized protein from Archaeoglobus fulgidus (strain ATCC 49558 / DSM 4304 / JCM 9628 / NBRC 100126 / VC-16).